The primary structure comprises 322 residues: PIH1 domain-containing protein 2 (322 aa).

This sequence belongs to the PIH1 family.

In Danio rerio (Zebrafish), this protein is PIH1 domain-containing protein 2 (pih1d2).